A 455-amino-acid polypeptide reads, in one-letter code: Argininosuccinate lyase (455 aa).

This sequence belongs to the lyase 1 family. Argininosuccinate lyase subfamily.

The protein localises to the cytoplasm. It catalyses the reaction 2-(N(omega)-L-arginino)succinate = fumarate + L-arginine. It participates in amino-acid biosynthesis; L-arginine biosynthesis; L-arginine from L-ornithine and carbamoyl phosphate: step 3/3. The protein is Argininosuccinate lyase of Caulobacter sp. (strain K31).